Reading from the N-terminus, the 396-residue chain is Elongation factor Tu (396 aa).

Positions 11 to 205 constitute a tr-type G domain; sequence KPHVNIGTIG…VIDDYIPTPK (195 aa). A G1 region spans residues 20-27; sequence GHVDHGKT. Residue 20-27 coordinates GTP; sequence GHVDHGKT. Mg(2+) is bound at residue Thr-27. Positions 61–65 are G2; the sequence is GITIN. Positions 82–85 are G3; sequence DAPG. GTP-binding positions include 82–86 and 137–140; these read DAPGH and NKTD. Positions 137–140 are G4; it reads NKTD. Positions 175-177 are G5; sequence SAL.

This sequence belongs to the TRAFAC class translation factor GTPase superfamily. Classic translation factor GTPase family. EF-Tu/EF-1A subfamily. As to quaternary structure, monomer.

It is found in the cytoplasm. It catalyses the reaction GTP + H2O = GDP + phosphate + H(+). Functionally, GTP hydrolase that promotes the GTP-dependent binding of aminoacyl-tRNA to the A-site of ribosomes during protein biosynthesis. This is Elongation factor Tu from Limosilactobacillus reuteri (strain DSM 20016) (Lactobacillus reuteri).